A 278-amino-acid polypeptide reads, in one-letter code: Large ribosomal subunit protein uL2 (278 aa).

Disordered regions lie at residues 1 to 53 (MAIR…TTRH) and 224 to 278 (VVMN…NKKR). Basic and acidic residues predominate over residues 23–33 (EITRSTPEKSL). The span at 258–267 (RNPNRYSNNM) shows a compositional bias: polar residues. Residues 269–278 (VRRRRPNKKR) are compositionally biased toward basic residues.

The protein belongs to the universal ribosomal protein uL2 family. As to quaternary structure, part of the 50S ribosomal subunit. Forms a bridge to the 30S subunit in the 70S ribosome.

In terms of biological role, one of the primary rRNA binding proteins. Required for association of the 30S and 50S subunits to form the 70S ribosome, for tRNA binding and peptide bond formation. It has been suggested to have peptidyltransferase activity; this is somewhat controversial. Makes several contacts with the 16S rRNA in the 70S ribosome. The polypeptide is Large ribosomal subunit protein uL2 (Corynebacterium aurimucosum (strain ATCC 700975 / DSM 44827 / CIP 107346 / CN-1) (Corynebacterium nigricans)).